Consider the following 909-residue polypeptide: Short transient receptor potential channel 3 (909 aa).

The tract at residues 1–92 is disordered; the sequence is MSTKVKKCRE…VRGPAFMFGA (92 aa). Over 1 to 447 the chain is Cytoplasmic; that stretch reads MSTKVKKCRE…KILRSPFMKF (447 aa). The span at 19 to 28 shows a compositional bias: acidic residues; the sequence is PEEEDGEAEG. The span at 47–57 shows a compositional bias: pro residues; the sequence is PPCPRAPPSPG. Low complexity predominate over residues 58-67; sequence PDASSEGSPS. ANK repeat units follow at residues 99–128, 134–163, 165–191, and 220–249; these read AEEERFLDAAEYGNIPVVRKMLEESRTLNV, MGQNALQLAVGNEHLEVTELLLKKENLARI, DALLLAISKGYVRIVEAILGHPGFAAS, and PDITPIILAAHCHKYEVVHLLLLKGARIER. Glu146 contacts Ca(2+). The chain crosses the membrane as a helical span at residues 448-465; that stretch reads VAHAASFIIFLGLLVFNA. Topologically, residues 466–496 are extracellular; sequence SDRFEGITTLPNITVIDYPKQIFRVKTTQFT. N-linked (GlcNAc...) asparagine glycosylation is present at Asn477. The chain crosses the membrane as a helical span at residues 497–515; the sequence is WTEMLIMVWVLGMMWSECK. 3 residues coordinate Ca(2+): Glu513, Glu516, and Asn531. Residues 516–528 are Cytoplasmic-facing; sequence ELWLEGPREYIVQ. The helical transmembrane segment at 529–550 threads the bilayer; it reads LWNVLDFGMLSIFIAAFTARFL. Over 551 to 594 the chain is Extracellular; that stretch reads AFLQATKAQQYVDSHVQESDLSEVTLPPEVQYFTYARDKWLPSD. A helical membrane pass occupies residues 595 to 618; that stretch reads PQIISEGLYAIAVVLSFSRIAYIL. The Cytoplasmic segment spans residues 619–637; sequence PANESFGPLQISLGRTVKD. Residues 622-651 form an ANK 5 repeat; it reads ESFGPLQISLGRTVKDIFKFMVLFIMVFLA. Residues 638–661 form a helical membrane-spanning segment; that stretch reads IFKFMVLFIMVFLAFMIGMFILYS. Topologically, residues 662–701 are extracellular; sequence YYLGAKVNPAFTTVEESFKTLFWSIFGLSEVTSVVLKYDH. A helical membrane pass occupies residues 702 to 727; sequence KFIENIGYVLYGIYNVTMVVVLLNML. Residues 728–909 are Cytoplasmic-facing; it reads IAMINSSYQE…KLNPSALRCE (182 aa). Residues Glu859, Glu862, Glu864, and Asp871 each contribute to the Ca(2+) site.

Belongs to the transient receptor (TC 1.A.4) family. STrpC subfamily. TRPC3 sub-subfamily. As to quaternary structure, homotetramer. Interacts with ITPR1, ITPR3, MX1 and RNF24. Interacts with JPH2; the interaction is involved in maintaining Ca(2+) homeostasis in skeletal muscle and is mediated by JPH2 'Ser-165' phosphorylation.

It is found in the cell membrane. It carries out the reaction Ca(2+)(in) = Ca(2+)(out). Activated by diacylglycerol (DAG) in a membrane-delimited fashion, independently of protein kinase C. Activated by inositol 1,4,5-triphosphate receptors (ITPR) with bound IP3. May be activated by internal calcium store depletion. Inhibited by intracellular Ca(2+). Functionally, forms a receptor-activated non-selective calcium permeant cation channel. May be operated by a phosphatidylinositol second messenger system activated by receptor tyrosine kinases or G-protein coupled receptors. In Rattus norvegicus (Rat), this protein is Short transient receptor potential channel 3 (Trpc3).